The following is a 154-amino-acid chain: Fucose mutarotase (154 aa).

Residue His24 is the Proton donor of the active site. Residue Asp32 coordinates substrate. Asp69 is an active-site residue. The substrate site is built by Met79, Tyr120, Tyr138, and Asn140. The active site involves Tyr120.

Belongs to the RbsD / FucU family. As to quaternary structure, mainly homodimer, but also exists as homotetramer, homooctamer, and homodecamer. The homodimeric form seems catalytically inactive.

The enzyme catalyses alpha-L-fucose = beta-L-fucose. The protein operates within carbohydrate metabolism; L-fucose metabolism. In terms of biological role, involved in the interconversion between alpha- and beta-L-fucoses. L-Fucose (6-deoxy-L-galactose) exists as alpha-L-fucose (29.5%) and beta-L-fucose (70.5%), the beta-form is metabolized through the salvage pathway. GDP-L-fucose formed either by the de novo or salvage pathways is transported into the endoplasmic reticulum, where it serves as a substrate for N- and O-glycosylations by fucosyltransferases. Fucosylated structures expressed on cell surfaces or secreted in biological fluids are believed to play a critical role in cell-cell adhesion and recognition processes. In Homo sapiens (Human), this protein is Fucose mutarotase (FUOM).